Reading from the N-terminus, the 121-residue chain is Holin-like protein CidA (121 aa).

Helical transmembrane passes span 3 to 23, 30 to 50, 58 to 78, and 89 to 109; these read WWKL…GEWI, PVPG…FNLV, GADF…VAVI, and IDLI…TGLL.

The protein belongs to the CidA/LrgA family. CidA subfamily.

The protein localises to the cell membrane. Functionally, increases the activity of extracellular murein hydrolases possibly by mediating their export via hole formation. Inhibited by the antiholin-like proteins LrgAB. In an unstressed cell, the LrgAB products probably inhibit the function of the CidA protein. When a cell is stressed by the addition of antibiotics or by other factors in the environment, CidA possibly oligomerizes within the bacterial cell membrane, creating lesions that disrupt the proton motive force, which in turn results in loss of cell viability. These lesions are also hypothesized to regulate the subsequent cell lysis by either allowing the murein hydrolases access to the cell wall substrate and/or regulating their activity by a possible change in the cell wall pH that results from loss of membrane potential. The chain is Holin-like protein CidA from Bacillus cereus (strain ATCC 10987 / NRS 248).